Here is a 276-residue protein sequence, read N- to C-terminus: MCIIFFKFDPRPVSKNAYRLILAANRDEFYNRPSKLADFWGNNSEILSGLDMEEGKAGGTWLGISTRGKLGALTNYLQPRQEPDARGRGELVSHFLTSDMDSLSYLKKVSTEGHLYNGFNIIAADLSTSKGDVVCYYGNRGEPEPIVLTPGTYGLSNALLETPWKKLCFGKQLFMEAVEQSEALPKDVLVTQLLDVLNNEEAQLPDPAIEDQGQEYVQPILNKYAAVCVRCATYGTRTNTIILVDANGHVTFTERSMLDKDTSRWETNTYEFTLQS.

This sequence belongs to the Tango2 family. Expressed in fetal liver, lung, heart and kidney. In brain, detected in the olfactory bulb, neocortex and cerebellum. Elevated in mitral cells and minimally expressed in bulb interneurons. In the cortex, restricted to the upper portion of layer 5. In the cerebellum, excluded from Purkinje cells but expressed in granule cells.

Its subcellular location is the cytoplasm. The protein resides in the mitochondrion. It localises to the golgi apparatus. In terms of biological role, may be involved in lipid homeostasis. The sequence is that of Transport and Golgi organization 2 homolog (Tango2) from Mus musculus (Mouse).